Reading from the N-terminus, the 797-residue chain is Glycoprotein gp2 (797 aa).

Positions 1 to 25 are cleaved as a signal peptide; that stretch reads MGFIYARKLLLCMAVSIYAIGSTTT. Disordered stretches follow at residues 24-188 and 212-549; these read TTTE…TTAA and AATT…EIVP. A compositionally biased stretch (low complexity) spans 212–373; the sequence is AATTTAATTT…PDSSTGSTST (162 aa). The segment covering 374–394 has biased composition (polar residues); sequence AEPSSTFTLTPSTATPSTDQF. Composition is skewed to low complexity over residues 395 to 430 and 445 to 457; these read TGSSASTESDSTDSSTVPTTGTESITESSSTTEAST and TPDGNTTSGNTTP. Residues 466-492 are compositionally biased toward polar residues; sequence FADTQQTPDNGVSTQHTTINDHTTANA. A compositionally biased stretch (basic residues) spans 495 to 505; that stretch reads HAGHHRGRAGG. Asn-590 is a glycosylation site (N-linked (GlcNAc...) asparagine; by host). The chain crosses the membrane as a helical span at residues 766–790; that stretch reads FALVAATTLTVTILCLLCCLYCMLT.

It is found in the virion membrane. Virulence factor. In Equine herpesvirus 1 (strain Ab4p) (EHV-1), this protein is Glycoprotein gp2 (EUs4).